The chain runs to 210 residues: Ribosomal RNA large subunit methyltransferase E (210 aa).

Residues glycine 67, tryptophan 69, aspartate 87, aspartate 103, and aspartate 128 each coordinate S-adenosyl-L-methionine. Lysine 168 (proton acceptor) is an active-site residue.

The protein belongs to the class I-like SAM-binding methyltransferase superfamily. RNA methyltransferase RlmE family.

The protein resides in the cytoplasm. The enzyme catalyses uridine(2552) in 23S rRNA + S-adenosyl-L-methionine = 2'-O-methyluridine(2552) in 23S rRNA + S-adenosyl-L-homocysteine + H(+). Functionally, specifically methylates the uridine in position 2552 of 23S rRNA at the 2'-O position of the ribose in the fully assembled 50S ribosomal subunit. The sequence is that of Ribosomal RNA large subunit methyltransferase E from Psychrobacter arcticus (strain DSM 17307 / VKM B-2377 / 273-4).